We begin with the raw amino-acid sequence, 264 residues long: Glutamate racemase (264 aa).

Substrate is bound by residues 10-11 and 42-43; these read DS and YG. The active-site Proton donor/acceptor is Cys73. 74-75 is a substrate binding site; it reads NT. Cys183 (proton donor/acceptor) is an active-site residue. 184–185 lines the substrate pocket; it reads TH.

Belongs to the aspartate/glutamate racemases family.

The enzyme catalyses L-glutamate = D-glutamate. The protein operates within cell wall biogenesis; peptidoglycan biosynthesis. In terms of biological role, provides the (R)-glutamate required for cell wall biosynthesis. In Streptococcus pyogenes serotype M49 (strain NZ131), this protein is Glutamate racemase.